The following is a 372-amino-acid chain: Methylthioribose-1-phosphate isomerase (372 aa).

D252 acts as the Proton donor in catalysis.

Belongs to the eIF-2B alpha/beta/delta subunits family. MtnA subfamily.

It localises to the cytoplasm. Its subcellular location is the nucleus. The enzyme catalyses 5-(methylsulfanyl)-alpha-D-ribose 1-phosphate = 5-(methylsulfanyl)-D-ribulose 1-phosphate. Its pathway is amino-acid biosynthesis; L-methionine biosynthesis via salvage pathway; L-methionine from S-methyl-5-thio-alpha-D-ribose 1-phosphate: step 1/6. Its function is as follows. Catalyzes the interconversion of methylthioribose-1-phosphate (MTR-1-P) into methylthioribulose-1-phosphate (MTRu-1-P). In Yarrowia lipolytica (strain CLIB 122 / E 150) (Yeast), this protein is Methylthioribose-1-phosphate isomerase.